We begin with the raw amino-acid sequence, 134 residues long: Fluoride-specific ion channel FluC 2 (134 aa).

4 helical membrane-spanning segments follow: residues 8–28 (IVAI…LNTW), 40–60 (IENI…LVIV), 69–89 (LGVG…DSVL), and 99–119 (LIYV…GYLL). G75 and T78 together coordinate Na(+).

This sequence belongs to the fluoride channel Fluc/FEX (TC 1.A.43) family.

Its subcellular location is the cell membrane. It catalyses the reaction fluoride(in) = fluoride(out). Its activity is regulated as follows. Na(+) is not transported, but it plays an essential structural role and its presence is essential for fluoride channel function. In terms of biological role, fluoride-specific ion channel. Important for reducing fluoride concentration in the cell, thus reducing its toxicity. In Halalkalibacterium halodurans (strain ATCC BAA-125 / DSM 18197 / FERM 7344 / JCM 9153 / C-125) (Bacillus halodurans), this protein is Fluoride-specific ion channel FluC 2.